Consider the following 298-residue polypeptide: Transcription factor bHLH114 (298 aa).

Positions 117-149 (LDHEIRNHKSSKEQITQDYKNLTSKRSEELEEN) form a coiled coil. Residues 126-154 (SSKEQITQDYKNLTSKRSEELEENSDEYS) are disordered. Residues 129 to 140 (EQITQDYKNLTS) show a composition bias toward polar residues. In terms of domain architecture, bHLH spans 163–212 (LETLSPLPSFKVRKEKLGDRITALQQLVSPFGKTDTASVLNEAVEYIKFL).

Homodimer. As to expression, differentiating root endodermis.

The protein resides in the nucleus. This chain is Transcription factor bHLH114 (BHLH114), found in Arabidopsis thaliana (Mouse-ear cress).